The following is a 382-amino-acid chain: V-set and immunoglobulin domain-containing protein 1 (382 aa).

The N-terminal stretch at 1-21 (MGLTFWKVFLILNCLAGQVNG) is a signal peptide. The 112-residue stretch at 22-133 (VQVTIPDSFV…FFGKNQGTIS (112 aa)) folds into the Ig-like V-type domain. The Extracellular segment spans residues 22-234 (VQVTIPDSFV…DLTTPYPGIG (213 aa)). N-linked (GlcNAc...) asparagine glycosylation is present at Asn32. Cystine bridges form between Cys43–Cys116 and Cys161–Cys211. One can recognise an Ig-like C2-type domain in the interval 140 to 227 (PSKPFCSIQG…GNSSCEIDLT (88 aa)). 2 N-linked (GlcNAc...) asparagine glycosylation sites follow: Asn200 and Asn219. The chain crosses the membrane as a helical span at residues 235 to 255 (IIVGAFVGTLIGVIIIISVVW). Topologically, residues 256–382 (FVRRKVKAKG…FCDEEKVIKP (127 aa)) are cytoplasmic. The interval 266–382 (KERKRNSKTT…FCDEEKVIKP (117 aa)) is disordered. Polar residues predominate over residues 273–285 (KTTTELEPMTKIN). The segment covering 286–298 (QRTEGETMPREDA) has biased composition (basic and acidic residues). The span at 327 to 341 (EPEPALQPTVEPPSG) shows a compositional bias: pro residues.

Its subcellular location is the membrane. This Bos taurus (Bovine) protein is V-set and immunoglobulin domain-containing protein 1 (VSIG1).